Reading from the N-terminus, the 376-residue chain is Chaperone protein DnaJ (376 aa).

The J domain occupies 5-69 (DYYEILGVDR…EKRARYDRFG (65 aa)). The segment at 135–217 (GLETDIRVPH…CNGKGVVRKT (83 aa)) adopts a CR-type zinc-finger fold. 8 residues coordinate Zn(2+): C148, C151, C165, C168, C191, C194, C205, and C208. 4 CXXCXGXG motif repeats span residues 148–155 (CPVCHGSR), 165–172 (CQTCGGSG), 191–198 (CPDCQGEG), and 205–212 (CSNCNGKG).

The protein belongs to the DnaJ family. In terms of assembly, homodimer. It depends on Zn(2+) as a cofactor.

It is found in the cytoplasm. In terms of biological role, participates actively in the response to hyperosmotic and heat shock by preventing the aggregation of stress-denatured proteins and by disaggregating proteins, also in an autonomous, DnaK-independent fashion. Unfolded proteins bind initially to DnaJ; upon interaction with the DnaJ-bound protein, DnaK hydrolyzes its bound ATP, resulting in the formation of a stable complex. GrpE releases ADP from DnaK; ATP binding to DnaK triggers the release of the substrate protein, thus completing the reaction cycle. Several rounds of ATP-dependent interactions between DnaJ, DnaK and GrpE are required for fully efficient folding. Also involved, together with DnaK and GrpE, in the DNA replication of plasmids through activation of initiation proteins. The protein is Chaperone protein DnaJ of Methanothermobacter thermautotrophicus (strain ATCC 29096 / DSM 1053 / JCM 10044 / NBRC 100330 / Delta H) (Methanobacterium thermoautotrophicum).